Reading from the N-terminus, the 208-residue chain is Large ribosomal subunit protein uL4 (208 aa).

The tract at residues 45 to 95 (RQGTHKAKTRSEVRGGGKKPFRQKGTGNARQGSSRSPIHVGGGTIFGPQPH) is disordered. Positions 69–80 (GTGNARQGSSRS) are enriched in polar residues.

The protein belongs to the universal ribosomal protein uL4 family. Part of the 50S ribosomal subunit.

Its function is as follows. One of the primary rRNA binding proteins, this protein initially binds near the 5'-end of the 23S rRNA. It is important during the early stages of 50S assembly. It makes multiple contacts with different domains of the 23S rRNA in the assembled 50S subunit and ribosome. Forms part of the polypeptide exit tunnel. The protein is Large ribosomal subunit protein uL4 of Chlorobium chlorochromatii (strain CaD3).